The primary structure comprises 295 residues: F-box protein SKIP24 (295 aa).

One can recognise an F-box; degenerate domain in the interval 19–66 (VKSSTFSYKDLCCISISSRRLFRLSCDDSLWDLLLVHDFPNHIVSASS). Coiled coils occupy residues 82-129 (REKE…SSLQ) and 167-209 (EGRL…ESMK). Positions 217 to 245 (KSIRNGDQGSNGKTKKLKTSINYSGDQVS) are disordered. Polar residues predominate over residues 235–245 (TSINYSGDQVS).

As to quaternary structure, part of a SCF (ASK-cullin-F-box) protein ligase complex. Interacts with SKP1A/ASK1 and SPK1B/ASK2.

The protein operates within protein modification; protein ubiquitination. Its function is as follows. Component of SCF(ASK-cullin-F-box) E3 ubiquitin ligase complexes, which may mediate the ubiquitination and subsequent proteasomal degradation of target proteins. This Arabidopsis thaliana (Mouse-ear cress) protein is F-box protein SKIP24 (SKIP24).